The primary structure comprises 366 residues: MKFDSAKIENVVGGGSFEIGDDDSKILDEIISEVINDIMPSEIKLKKKIEMIDNTIEYLSYELLVTFIKHGVEFGIFPIIAKYSPKIDDIPLLVKYPNKQFILDYIKTALKLEILKYEDEKIKINEDFELNIKMPKFDKIISDYVMKYNFITHVSRYALISYSHPKIAISFKKDPDIWDMILSSPYYSLCREIASDYLKIDKGDYILDVGCGSRSPKYFIDMIYPEGHYMGVDISKGLLQIAECRIKRLYCDSYELKNIDFTKIIPKEKYDYIICSHTMIYAPSLKQFLNKMMSSIHSGGKIFISEEFILDKNENICKEVFEFYNRLNKRFRGYYSEKDIVDILESLGYDFKIESLGNGILVIEKI.

This is an uncharacterized protein from Methanocaldococcus jannaschii (strain ATCC 43067 / DSM 2661 / JAL-1 / JCM 10045 / NBRC 100440) (Methanococcus jannaschii).